Consider the following 1755-residue polypeptide: MESQQLSQHSHISHGSACASVTSKEVHTNQDPLDVSASKTEECEKASTKANSQQTTTPASSAVPENPHHASPQPASVPPPQNGPYPQQCMMTQNQANPSGWSFYGHPSMIPYTPYQMSPMYFPPGPQSQFPQYPSSVGTPLSTPSPESGNTFTDSSSADSDMTSTKKYVRPPPMLTSPNDFPNWVKTYIKFLQNSNLGGIIPTVNGKPVRQITDDELTFLYNTFQIFAPSQFLPTWVKDILSVDYTDIMKILSKSIEKMQSDTQEANDIVTLANLQYNGSTPADAFETKVTNIIDRLNNNGIHINNKVACQLIMRGLSGEYKFLRYTRHRHLNMTVAELFLDIHAIYEEQQGSRNSKPNYRRNLSDEKNDSRSYTNTTKPKVIARNPQKTNNSKSKTARAHNVSTSNNSPSTDNDSISKSTTEPIQLNNKHDLHLGQELTESTVNHTNHSDDELPGHLLLDSGASRTLIRSAHHIHSASSNPDINVVDAQKRNIPINAIGDLQFHFQDNTKTSIKVLHTPNIAYDLLSLNELAAVDITACFTKNVLERSDGTVLAPIVQYGDFYWVSKRYLLPSNISVPTINNVHTSESTRKYPYPFIHRMLAHANAQTIRYSLKNNTITYFNESDVDWSSAIDYQCPDCLIGKSTKHRHIKGSRLKYQNSYEPFQYLHTDIFGPVHNLPKSAPSYFISFTDETTKFRWVYPLHDRREDSILDVFTTILAFIKNQFQASVLVIQMDRGSEYTNRTLHKFLEKNGITPCYTTTADSRAHGVAERLNRTLLDDCRTQLQCSGLPNHLWFSAIEFSTIVRNSLASPKSKKSARQHAGLAGLDISTLLPFGQPVIVNDHNPNSKIHPRGIPGYALHPSRNSYGYIIYLPSLKKTVDTTNYVILQGKESRLDQFNYDALTFDEDLNRLTASYQSFIASNEIQESNDLNIESDHDFQSDIELHPEQPRNVLSKAVSPTDSTPPSTHTEDSKRVSKTNIRAPREVDPNISESNILPSKKRSSTPQISNIESTGSGGMHKLNVPLLAPMSQSNTHESSHASKSKDFRHSDSYSENETNHTNVPISSTGGTNNKTVPQISDQETEKRIIHRSPSIDASPPENNSSHNIVPIKTPTTVSEQNTEESIIADLPLPDLPPESPTEFPDPFKELPPINSHQTNSSLGGIGDSNAYTTINSKKRSLEDNETEIKVSRDTWNTKNMRSLEPPRSKKRIHLIAAVKAVKSIKPIRTTLRYDEAITYNKDIKEKEKYIEAYHKEVNQLLKMKTWDTDEYYDRKEIDPKRVINSMFIFNKKRDGTHKARFVARGDIQHPDTYDTGMQSNTVHHYALMTSLSLALDNNYYITQLDISSAYLYADIKEELYIRPPPHLGMNDKLIRLKKSHYGLKQSGANWYETIKSYLIKQCGMEEVRGWSCVFKNSQVTICLFVDDMILFSKDLNANKKIITTLKKQYDTKIINLGESDNEIQYDILGLEIKYQRGKYMKLGMENSLTEKIPKLNVPLNPKGRKLSAPGQPGLYIDQDELEIDEDEYKEKVHEMQKLIGLASYVGYKFRFDLLYYINTLAQHILFPSRQVLDMTYELIQFMWDTRDKQLIWHKNKPTEPDNKLVAISDASYGNQPYYKSQIGNIFLLNGKVIGGKSTKASLTCTSTTEAEIHAISESVPLLNNLSYLIQELNKKPIIKGLLTDSRSTISIIKSTNEEKFRNRFFGTKAMRLRDEVSGNNLYVYYIETKKNIADVMTKPLPIKTFKLLTNKWIH.

Over residues 1 to 16 (MESQQLSQHSHISHGS) the composition is skewed to low complexity. Disordered regions lie at residues 1–93 (MESQ…MMTQ), 126–173 (PQSQ…RPPP), and 352–421 (GSRN…SKST). 2 stretches are compositionally biased toward polar residues: residues 48–60 (TKAN…TPAS) and 127–152 (QSQF…GNTF). The segment covering 153 to 165 (TDSSSADSDMTST) has biased composition (low complexity). The tract at residues 299–401 (NNGIHINNKV…NSKSKTARAH (103 aa)) is RNA-binding. Residues 402–418 (NVSTSNNSPSTDNDSIS) are compositionally biased toward low complexity. Ser-416 bears the Phosphoserine mark. The active-site For protease activity; shared with dimeric partner is Asp-461. An integrase-type zinc finger-like region spans residues 583–640 (NVHTSESTRKYPYPFIHRMLAHANAQTIRYSLKNNTITYFNESDVDWSSAIDYQCPDC). The Integrase catalytic domain maps to 660 to 835 (NSYEPFQYLH…AGLDISTLLP (176 aa)). Residues Asp-671 and Asp-736 each coordinate Mg(2+). Disordered stretches follow at residues 956–1087 (SKAV…ETEK), 1092–1111 (RSPS…NIVP), and 1130–1186 (DLPL…EDNE). A compositionally biased stretch (low complexity) spans 960–969 (SPTDSTPPST). The span at 1005–1015 (STPQISNIEST) shows a compositional bias: polar residues. Residues 1038–1053 (ESSHASKSKDFRHSDS) show a composition bias toward basic and acidic residues. Composition is skewed to polar residues over residues 1054 to 1082 (YSEN…QISD) and 1101 to 1111 (PENNSSHNIVP). Residues 1178 to 1212 (KKRSLEDNETEIKVSRDTWNTKNMRSLEPPRSKKR) carry the Bipartite nuclear localization signal motif. Residues 1338 to 1476 (NNYYITQLDI…DILGLEIKYQ (139 aa)) enclose the Reverse transcriptase Ty1/copia-type domain. The Mg(2+) site is built by Asp-1346, Asp-1427, Asp-1428, Asp-1610, Glu-1652, and Asp-1685. The 143-residue stretch at 1610–1752 (DASYGNQPYY…IKTFKLLTNK (143 aa)) folds into the RNase H Ty1/copia-type domain.

The capsid protein forms a homotrimer, from which the VLPs are assembled. The protease is a homodimer, whose active site consists of two apposed aspartic acid residues. Post-translationally, initially, virus-like particles (VLPs) are composed of the structural unprocessed proteins Gag and Gag-Pol, and also contain the host initiator methionine tRNA (tRNA(i)-Met) which serves as a primer for minus-strand DNA synthesis, and a dimer of genomic Ty RNA. Processing of the polyproteins occurs within the particle and proceeds by an ordered pathway, called maturation. First, the protease (PR) is released by autocatalytic cleavage of the Gag-Pol polyprotein yielding capsid protein p45 and a Pol-p154 precursor protein. This cleavage is a prerequisite for subsequent processing of Pol-p154 at the remaining sites to release the mature structural and catalytic proteins. Maturation takes place prior to the RT reaction and is required to produce transposition-competent VLPs.

The protein resides in the cytoplasm. Its subcellular location is the nucleus. The enzyme catalyses DNA(n) + a 2'-deoxyribonucleoside 5'-triphosphate = DNA(n+1) + diphosphate. The catalysed reaction is Endonucleolytic cleavage to 5'-phosphomonoester.. Capsid protein (CA) is the structural component of the virus-like particle (VLP), forming the shell that encapsulates the retrotransposons dimeric RNA genome. The particles are assembled from trimer-clustered units and there are holes in the capsid shells that allow for the diffusion of macromolecules. CA also has nucleocapsid-like chaperone activity, promoting primer tRNA(i)-Met annealing to the multipartite primer-binding site (PBS), dimerization of Ty1 RNA and initiation of reverse transcription. Its function is as follows. The aspartyl protease (PR) mediates the proteolytic cleavages of the Gag and Gag-Pol polyproteins after assembly of the VLP. Functionally, reverse transcriptase/ribonuclease H (RT) is a multifunctional enzyme that catalyzes the conversion of the retro-elements RNA genome into dsDNA within the VLP. The enzyme displays a DNA polymerase activity that can copy either DNA or RNA templates, and a ribonuclease H (RNase H) activity that cleaves the RNA strand of RNA-DNA heteroduplexes during plus-strand synthesis and hydrolyzes RNA primers. The conversion leads to a linear dsDNA copy of the retrotransposon that includes long terminal repeats (LTRs) at both ends. In terms of biological role, integrase (IN) targets the VLP to the nucleus, where a subparticle preintegration complex (PIC) containing at least integrase and the newly synthesized dsDNA copy of the retrotransposon must transit the nuclear membrane. Once in the nucleus, integrase performs the integration of the dsDNA into the host genome. This Saccharomyces cerevisiae (strain ATCC 204508 / S288c) (Baker's yeast) protein is Transposon Ty1-JR1 Gag-Pol polyprotein (TY1B-JR1).